Here is an 88-residue protein sequence, read N- to C-terminus: Small ribosomal subunit protein bS20 (88 aa).

Residues 1–27 form a disordered region; the sequence is MANSKSAKKRALQSEKRRQHNASRRSM.

The protein belongs to the bacterial ribosomal protein bS20 family.

Binds directly to 16S ribosomal RNA. This chain is Small ribosomal subunit protein bS20, found in Shewanella sp. (strain ANA-3).